The primary structure comprises 87 residues: Small ribosomal subunit protein uS17 (87 aa).

The protein belongs to the universal ribosomal protein uS17 family. Part of the 30S ribosomal subunit.

Functionally, one of the primary rRNA binding proteins, it binds specifically to the 5'-end of 16S ribosomal RNA. This is Small ribosomal subunit protein uS17 from Bacillus subtilis (strain 168).